The chain runs to 141 residues: Large ribosomal subunit protein uL11 (141 aa).

Belongs to the universal ribosomal protein uL11 family. As to quaternary structure, part of the ribosomal stalk of the 50S ribosomal subunit. Interacts with L10 and the large rRNA to form the base of the stalk. L10 forms an elongated spine to which L12 dimers bind in a sequential fashion forming a multimeric L10(L12)X complex. In terms of processing, one or more lysine residues are methylated.

Forms part of the ribosomal stalk which helps the ribosome interact with GTP-bound translation factors. The chain is Large ribosomal subunit protein uL11 from Lacticaseibacillus casei (strain BL23) (Lactobacillus casei).